The following is a 281-amino-acid chain: uncharacterized protein (281 aa).

The signal sequence occupies residues 1 to 23; sequence MKLYRSLKAALLPGICTSILLAS. Residue C24 is the site of N-palmitoyl cysteine attachment. C24 is lipidated: S-diacylglycerol cysteine. The tract at residues 145–165 is disordered; that stretch reads HHDHNHMHNHEHEHEEHHDEE. Over residues 150-161 the composition is skewed to basic and acidic residues; it reads HMHNHEHEHEEH.

It localises to the cell membrane. This is an uncharacterized protein from Mycoplasma genitalium (strain ATCC 33530 / DSM 19775 / NCTC 10195 / G37) (Mycoplasmoides genitalium).